An 88-amino-acid polypeptide reads, in one-letter code: YcgL domain-containing protein NTHI1684 (88 aa).

The YcgL domain maps to 1-85; sequence MLCAIYKSKK…QDDGLFNSLS (85 aa).

The sequence is that of YcgL domain-containing protein NTHI1684 from Haemophilus influenzae (strain 86-028NP).